Reading from the N-terminus, the 482-residue chain is Glutamyl-tRNA(Gln) amidotransferase subunit A (482 aa).

Residues lysine 75 and serine 150 each act as charge relay system in the active site. Serine 174 serves as the catalytic Acyl-ester intermediate.

The protein belongs to the amidase family. GatA subfamily. As to quaternary structure, heterotrimer of A, B and C subunits.

The catalysed reaction is L-glutamyl-tRNA(Gln) + L-glutamine + ATP + H2O = L-glutaminyl-tRNA(Gln) + L-glutamate + ADP + phosphate + H(+). Its function is as follows. Allows the formation of correctly charged Gln-tRNA(Gln) through the transamidation of misacylated Glu-tRNA(Gln) in organisms which lack glutaminyl-tRNA synthetase. The reaction takes place in the presence of glutamine and ATP through an activated gamma-phospho-Glu-tRNA(Gln). This Acaryochloris marina (strain MBIC 11017) protein is Glutamyl-tRNA(Gln) amidotransferase subunit A.